Reading from the N-terminus, the 318-residue chain is Phosphatidylglycerol--prolipoprotein diacylglyceryl transferase (318 aa).

A run of 3 helical transmembrane segments spans residues 24–44 (GPST…YLLP), 60–80 (LLLL…VFEI), and 115–135 (LFSG…LFIT). Residue Arg-164 participates in a 1,2-diacyl-sn-glycero-3-phospho-(1'-sn-glycerol) binding. Helical transmembrane passes span 198-218 (VPVW…FFYF) and 285-305 (GFSQ…FFIL).

This sequence belongs to the Lgt family.

The protein localises to the cell inner membrane. The enzyme catalyses L-cysteinyl-[prolipoprotein] + a 1,2-diacyl-sn-glycero-3-phospho-(1'-sn-glycerol) = an S-1,2-diacyl-sn-glyceryl-L-cysteinyl-[prolipoprotein] + sn-glycerol 1-phosphate + H(+). It participates in protein modification; lipoprotein biosynthesis (diacylglyceryl transfer). Its function is as follows. Catalyzes the transfer of the diacylglyceryl group from phosphatidylglycerol to the sulfhydryl group of the N-terminal cysteine of a prolipoprotein, the first step in the formation of mature lipoproteins. The sequence is that of Phosphatidylglycerol--prolipoprotein diacylglyceryl transferase from Leptospira interrogans serogroup Icterohaemorrhagiae serovar copenhageni (strain Fiocruz L1-130).